The following is a 153-amino-acid chain: Aspartate carbamoyltransferase regulatory chain (153 aa).

The Zn(2+) site is built by cysteine 108, cysteine 113, cysteine 137, and cysteine 140.

This sequence belongs to the PyrI family. Contains catalytic and regulatory chains. It depends on Zn(2+) as a cofactor.

Functionally, involved in allosteric regulation of aspartate carbamoyltransferase. This Methanosphaera stadtmanae (strain ATCC 43021 / DSM 3091 / JCM 11832 / MCB-3) protein is Aspartate carbamoyltransferase regulatory chain.